We begin with the raw amino-acid sequence, 49 residues long: Large ribosomal subunit protein bL33B (49 aa).

Belongs to the bacterial ribosomal protein bL33 family.

This chain is Large ribosomal subunit protein bL33B, found in Listeria welshimeri serovar 6b (strain ATCC 35897 / DSM 20650 / CCUG 15529 / CIP 8149 / NCTC 11857 / SLCC 5334 / V8).